Here is a 319-residue protein sequence, read N- to C-terminus: GTP 3',8-cyclase (319 aa).

In terms of domain architecture, Radical SAM core spans 4–219 (KHGRKINYLR…SKHSDLIPVE (216 aa)). GTP is bound at residue arginine 13. Residues cysteine 20 and cysteine 24 each coordinate [4Fe-4S] cluster. Position 26 (tyrosine 26) interacts with S-adenosyl-L-methionine. Cysteine 27 provides a ligand contact to [4Fe-4S] cluster. Arginine 63 serves as a coordination point for GTP. Glycine 67 lines the S-adenosyl-L-methionine pocket. Threonine 94 provides a ligand contact to GTP. An S-adenosyl-L-methionine-binding site is contributed by serine 118. Lysine 155 contacts GTP. Methionine 189 is an S-adenosyl-L-methionine binding site. Positions 249 and 252 each coordinate [4Fe-4S] cluster. Position 254-256 (254-256 (RVR)) interacts with GTP. [4Fe-4S] cluster is bound at residue cysteine 266.

It belongs to the radical SAM superfamily. MoaA family. Monomer and homodimer. [4Fe-4S] cluster serves as cofactor.

It carries out the reaction GTP + AH2 + S-adenosyl-L-methionine = (8S)-3',8-cyclo-7,8-dihydroguanosine 5'-triphosphate + 5'-deoxyadenosine + L-methionine + A + H(+). Its pathway is cofactor biosynthesis; molybdopterin biosynthesis. Catalyzes the cyclization of GTP to (8S)-3',8-cyclo-7,8-dihydroguanosine 5'-triphosphate. The chain is GTP 3',8-cyclase from Clostridium botulinum (strain Okra / Type B1).